The sequence spans 329 residues: Phosphate acetyltransferase (329 aa).

Belongs to the phosphate acetyltransferase and butyryltransferase family.

The protein resides in the cytoplasm. The enzyme catalyses acetyl-CoA + phosphate = acetyl phosphate + CoA. Its pathway is metabolic intermediate biosynthesis; acetyl-CoA biosynthesis; acetyl-CoA from acetate: step 2/2. The protein is Phosphate acetyltransferase (pta) of Corynebacterium glutamicum (strain ATCC 13032 / DSM 20300 / JCM 1318 / BCRC 11384 / CCUG 27702 / LMG 3730 / NBRC 12168 / NCIMB 10025 / NRRL B-2784 / 534).